Reading from the N-terminus, the 691-residue chain is MAREYPLDRYRNIGIMAHIDAGKTTTTERILFYTGAIHRMGEVHEGNTTTDWMVQERERGITITSAAISAFWARHDQRYRVNIIDTPGHVDFTIEVERSLRVLDGAITVFDAVNGVEPQSETVWRQADKYKVPRICFINKMDRVGADFEMSVGTIREKLGARAVRMQLPLGAEDKHRGVIDLLKMKALVFQDSEQGSHYEESDIPEEFKEAADAARAELLEAAAEQDDALTEKFLEGVELTEDEVRGAIRKGCLGLKLFPVFCGSAFRHKGVQPLLDAVVDYLPSPLEVPPIHGKTPNGEDAVRETRDDAPFSALAFKIMNDPAFQSQTLTFLRVYSGKLEAGTAVWNSVKGKRERISRLVQMRADKKDEITECYAGDICAVVGLKLAGTGDTLCDDKQPIILERMDFPEPVIDIAIEPKSTADQDKILQSLQRLAMEDPSFRVRTNEETGQTLIAGMGELHLEIIVDRLLREFKVDANIGKPQVAYRETVTTQVEMEGKYIRQTGGRGQYGHIWLRVAPNEPGKGFSFENKVTGGVVSKEFVDAVKAGCAEAMQNGPVAGYPMVDVKVEAFDGSMHDVDSSEIAFKIAGSLAFKDAVRMATPVLLEPIMNCEIVTPDDFMGDVIGDLNGRRGKVQGMTPRPGRVQAIQAQVPLAAMFGYSTDLRSRSQGRATYTMQFSHYAPAPKTALNR.

The tr-type G domain occupies 8-287; that stretch reads DRYRNIGIMA…AVVDYLPSPL (280 aa). Residues 17–24, 85–89, and 139–142 contribute to the GTP site; these read AHIDAGKT, DTPGH, and NKMD.

It belongs to the TRAFAC class translation factor GTPase superfamily. Classic translation factor GTPase family. EF-G/EF-2 subfamily.

Its subcellular location is the cytoplasm. Catalyzes the GTP-dependent ribosomal translocation step during translation elongation. During this step, the ribosome changes from the pre-translocational (PRE) to the post-translocational (POST) state as the newly formed A-site-bound peptidyl-tRNA and P-site-bound deacylated tRNA move to the P and E sites, respectively. Catalyzes the coordinated movement of the two tRNA molecules, the mRNA and conformational changes in the ribosome. The protein is Elongation factor G 2 of Myxococcus xanthus (strain DK1622).